The primary structure comprises 419 residues: DNA ligase (419 aa).

Positions 1-120 are NTD; that stretch reads MLNQFPGQLS…ARQKRGAHTN (120 aa). The tract at residues 121-317 is AD domain; it reads RGMIPPMLVK…NYHSPHLAKL (197 aa). Lys151 (N6-AMP-lysine intermediate) is an active-site residue. The OB domain stretch occupies residues 318 to 419; sequence KPLLDAEFIL…REPINVLEII (102 aa).

The protein belongs to the ATP-dependent DNA ligase family.

The protein localises to the virion. It catalyses the reaction ATP + (deoxyribonucleotide)n-3'-hydroxyl + 5'-phospho-(deoxyribonucleotide)m = (deoxyribonucleotide)n+m + AMP + diphosphate.. In terms of biological role, very low-fidelity DNA ligase that seals nicks in double-stranded DNA during DNA repair. Together with the viral repair DNA polymerase X, fills the single nucleotide gaps generated by the AP endonuclease. It is not essential for viral replication and recombination. Displays a very low adenylation activity towards DNA with 3'-dideoxy- or 3'-amino-terminated nicks compared to regular nick DNA. The sequence is that of DNA ligase from Ornithodoros (relapsing fever ticks).